The chain runs to 395 residues: Protein phosphatase methylesterase 1 (395 aa).

Catalysis depends on residues Ser-194, Asp-222, and His-348.

This sequence belongs to the AB hydrolase superfamily.

It catalyses the reaction [phosphatase 2A protein]-C-terminal L-leucine methyl ester + H2O = [phosphatase 2A protein]-C-terminal L-leucine + methanol + H(+). Demethylates proteins that have been reversibly carboxymethylated. Demethylates the phosphatase PP2A catalytic subunit. The polypeptide is Protein phosphatase methylesterase 1 (PPE1) (Kluyveromyces lactis (strain ATCC 8585 / CBS 2359 / DSM 70799 / NBRC 1267 / NRRL Y-1140 / WM37) (Yeast)).